A 306-amino-acid polypeptide reads, in one-letter code: Solute carrier family 25 member 48 (306 aa).

Solcar repeat units lie at residues 3–86 (SFQL…TQRF), 101–200 (RSLS…LSEW), and 209–296 (PSPY…SLKA). 6 helical membrane passes run 9 to 29 (FVAG…LDTV), 61 to 81 (GMSF…GVFS), 107 to 127 (LLAS…VELI), 184 to 204 (IPGY…ITPE), 212 to 232 (YAAW…ATPM), and 272 to 290 (ITVN…FLGY).

It belongs to the mitochondrial carrier (TC 2.A.29) family.

The protein resides in the mitochondrion inner membrane. The protein is Solute carrier family 25 member 48 (Slc25a48) of Mus musculus (Mouse).